The primary structure comprises 395 residues: MVTMEELREMDCSVLKRLMNRDENGGTAGSSGGSHGALGLLSGGKCLLLDCRPFLAHSAGYIRGSVNVRCNTIVRRRAKGSVSLEQILPAEEEVRARLRSGLYSAVIVYDERSPRAESLREDSTVSLVVQALRRNAERTDICLLKGGYERFSSEYPEFCSKTKALAAIPPPVPPSTNESLDLGCSSCGTPLHDQGGPVEILPFLYLGSAYHAARRDMLDALGITALLNVSSDCPNHFEGHYQYKCIPVEDNHKADISSWFMEAIEYIDAVKDCRGRVLVHCQAGISRSATICLAYLMMKKRVRLEEAFEFVKQRRSIISPNFSFMGQLLQFESQVLTTSCAAEAASPSGPLRERGKATPTPTSQFVFSFPVSVGVHAAPSNLPYLHSPITTSPSC.

Val-2 carries the post-translational modification N-acetylvaline. In terms of domain architecture, Rhodanese spans 42–160 (SGGKCLLLDC…FSSEYPEFCS (119 aa)). Positions 196–337 (GPVEILPFLY…LLQFESQVLT (142 aa)) constitute a Tyrosine-protein phosphatase domain. Residue Cys-281 is the Phosphocysteine intermediate of the active site. Phosphoserine; by MAPK is present on residues Ser-387 and Ser-392.

It belongs to the protein-tyrosine phosphatase family. Non-receptor class dual specificity subfamily. As to quaternary structure, hollow spherical complex composed of 24 subunits with pseudooctahedral symmetry, has a tetramer as the basic unit. In terms of processing, phosphorylation in the C-terminus by ERK1/2 inhibits proteasomal degradation and stabilizes the protein. As to expression, expressed at moderate levels in nearly all tissues and cells including brain, spleen, and testes with the higher expression in the heart and lung and lower expression in skeletal muscle and kidney. Undetectable in liver. Expressed in many areas of the brain with very strong expression in the hippocampus, piriform cortex, and the suprachiasmatic nucleus.

It localises to the nucleus. The catalysed reaction is O-phospho-L-tyrosyl-[protein] + H2O = L-tyrosyl-[protein] + phosphate. It carries out the reaction O-phospho-L-seryl-[protein] + H2O = L-seryl-[protein] + phosphate. The enzyme catalyses O-phospho-L-threonyl-[protein] + H2O = L-threonyl-[protein] + phosphate. Its function is as follows. Regulates mitogenic signal transduction by dephosphorylating both Thr and Tyr residues on MAP kinases ERK1 and ERK2. This is Dual specificity protein phosphatase 4 (Dusp4) from Rattus norvegicus (Rat).